The chain runs to 78 residues: Large ribosomal subunit protein bL28 (78 aa).

It belongs to the bacterial ribosomal protein bL28 family.

This is Large ribosomal subunit protein bL28 from Flavobacterium psychrophilum (strain ATCC 49511 / DSM 21280 / CIP 103535 / JIP02/86).